The following is a 1061-amino-acid chain: Transcription termination factor 2 (1061 aa).

Disordered stretches follow at residues 1–163 (MSSE…TAEA) and 212–253 (ILSS…VKTS). Residues 32–46 (LSKSSRLSKSSRPSS) show a composition bias toward low complexity. Residues serine 108 and serine 110 each carry the phosphoserine modification. The span at 138-152 (LSDDDSEIEYSDEVQ) shows a compositional bias: acidic residues. A phosphoserine mark is found at serine 214 and serine 215. A Phosphothreonine modification is found at threonine 216. Residues 237-253 (KSLSPRSSAGASVVKTS) show a composition bias toward polar residues. The 201-residue stretch at 452 to 652 (WRERKLPRGG…YALLKFLRCS (201 aa)) folds into the Helicase ATP-binding domain. 465–472 (DDMGLGKT) lines the ATP pocket. A disordered region spans residues 485-523 (GQEMSEGKDESSDSDSEDDKNKKRKSVTGWKSKGRKDTR). Over residues 506-522 (KKRKSVTGWKSKGRKDT) the composition is skewed to basic residues. The DEAH box motif lies at 603 to 606 (DEAH). The Helicase C-terminal domain occupies 891 to 1056 (KINMVIQILK…SSKLTIDDLK (166 aa)).

It belongs to the SNF2/RAD54 helicase family.

The protein localises to the nucleus. DsDNA-dependent ATPase which acts as a transcription termination factor by coupling ATP hydrolysis with removal of RNA polymerase II from the DNA template. The chain is Transcription termination factor 2 (lds) from Drosophila melanogaster (Fruit fly).